The chain runs to 157 residues: MRIGNGYDVHRLAPGQKLVLGGVEIPFECGLIGWSDADVLTHAIMDSLLGAAALGDIGLYFPPGDPKFKGISSLKLLEQVTALLAEKGFGIINVDSVIVAEEPKLRGHVDTMRKHLAKAMGIDPGRVGIKASTSEQLGFVGREEGMAAWAVALVDEK.

Residues Asp-8, His-10, and His-42 each contribute to the a divalent metal cation site. Residue 8-10 (DVH) participates in 4-CDP-2-C-methyl-D-erythritol 2-phosphate binding. Residues 56-58 (DIG), 132-135 (STSE), Phe-139, and Arg-142 each bind 4-CDP-2-C-methyl-D-erythritol 2-phosphate.

Belongs to the IspF family. As to quaternary structure, homotrimer. It depends on a divalent metal cation as a cofactor.

It catalyses the reaction 4-CDP-2-C-methyl-D-erythritol 2-phosphate = 2-C-methyl-D-erythritol 2,4-cyclic diphosphate + CMP. It participates in isoprenoid biosynthesis; isopentenyl diphosphate biosynthesis via DXP pathway; isopentenyl diphosphate from 1-deoxy-D-xylulose 5-phosphate: step 4/6. In terms of biological role, involved in the biosynthesis of isopentenyl diphosphate (IPP) and dimethylallyl diphosphate (DMAPP), two major building blocks of isoprenoid compounds. Catalyzes the conversion of 4-diphosphocytidyl-2-C-methyl-D-erythritol 2-phosphate (CDP-ME2P) to 2-C-methyl-D-erythritol 2,4-cyclodiphosphate (ME-CPP) with a corresponding release of cytidine 5-monophosphate (CMP). The chain is 2-C-methyl-D-erythritol 2,4-cyclodiphosphate synthase from Dehalococcoides mccartyi (strain ATCC BAA-2266 / KCTC 15142 / 195) (Dehalococcoides ethenogenes (strain 195)).